An 874-amino-acid polypeptide reads, in one-letter code: Cap-specific mRNA (nucleoside-2'-O-)-methyltransferase 1A (874 aa).

Residues 1–10 (MSERGDDDRT) are compositionally biased toward basic and acidic residues. Residues 1 to 64 (MSERGDDDRT…APPTKQKTKA (64 aa)) are disordered. The 47-residue stretch at 60-106 (QKTKAEEMMERMGYKAGEGLGKNKQGIQEPVALSTQRGKTGLGHEGA) folds into the G-patch domain. The 230-residue stretch at 211–440 (FFQNRAAMKT…ERYITCKGLR (230 aa)) folds into the RrmJ-type SAM-dependent 2'-O-MTase domain. Glycine 273 and aspartate 354 together coordinate S-adenosyl-L-methionine. Lysine 394 acts as the Proton acceptor in catalysis. The interval 535 to 555 (PNKQRPRGGDRGSRNGNQERL) is disordered.

It catalyses the reaction a 5'-end (N(7)-methyl 5'-triphosphoguanosine)-ribonucleoside in mRNA + S-adenosyl-L-methionine = a 5'-end (N(7)-methyl 5'-triphosphoguanosine)-(2'-O-methyl-ribonucleoside) in mRNA + S-adenosyl-L-homocysteine + H(+). Its function is as follows. S-adenosyl-L-methionine-dependent methyltransferase that mediates mRNA cap1 2'-O-ribose methylation to the 5'-cap structure of mRNAs. Methylates the ribose of the first nucleotide of a m(7)GpppG-capped mRNA to produce m(7)GpppNmp (cap1). Cap1 modification is linked to higher levels of translation. The chain is Cap-specific mRNA (nucleoside-2'-O-)-methyltransferase 1A from Caenorhabditis briggsae.